Reading from the N-terminus, the 312-residue chain is R2-like ligand binding oxidase (312 aa).

The Mn(2+) site is built by E68, E101, and H104. A cross-link (3-(O4'-tyrosyl)-valine (Val-Tyr)) is located at residues V71–Y162. E101 is a binding site for Fe cation. Residues E167, E202, and H205 each coordinate Fe cation.

It belongs to the ribonucleoside diphosphate reductase small chain family. R2-like ligand binding oxidase subfamily. Homodimer. It depends on Fe cation as a cofactor. The cofactor is Mn(2+).

Its function is as follows. Probable oxidase that might be involved in lipid metabolism. In Mycobacterium sp. (strain JLS), this protein is R2-like ligand binding oxidase.